The primary structure comprises 291 residues: Probable ABC transporter permease protein PH1038 (291 aa).

The next 8 membrane-spanning stretches (helical) occupy residues 7–27 (PFFF…YPVF), 75–95 (IVWI…FALL), 106–126 (IIKS…GLII), 133–153 (GAGV…AITW), 160–180 (ALFS…MLMY), 208–228 (FVIW…TLLW), 232–252 (IFDI…MVLA), and 267–287 (YAAV…LWLI). One can recognise an ABC transmembrane type-1 domain in the interval 71-286 (LIHNIVWIAI…ALTFIPALWL (216 aa)).

The protein belongs to the binding-protein-dependent transport system permease family. MalFG subfamily.

Its subcellular location is the cell membrane. In terms of biological role, probably part of a binding-protein-dependent transport system PH1036/38/39. Probably responsible for the translocation of the substrate across the membrane. This is Probable ABC transporter permease protein PH1038 from Pyrococcus horikoshii (strain ATCC 700860 / DSM 12428 / JCM 9974 / NBRC 100139 / OT-3).